Consider the following 496-residue polypeptide: Glycerol kinase (496 aa).

An ADP-binding site is contributed by T11. ATP contacts are provided by T11, T12, and S13. Position 11 (T11) interacts with sn-glycerol 3-phosphate. An ADP-binding site is contributed by R15. Residues R81, E82, Y133, and D242 each contribute to the sn-glycerol 3-phosphate site. Residues R81, E82, Y133, D242, and Q243 each coordinate glycerol. ADP is bound by residues T264 and G307. ATP is bound by residues T264, G307, and Q311. Position 413 (N413) interacts with ADP.

It belongs to the FGGY kinase family.

It carries out the reaction glycerol + ATP = sn-glycerol 3-phosphate + ADP + H(+). It participates in polyol metabolism; glycerol degradation via glycerol kinase pathway; sn-glycerol 3-phosphate from glycerol: step 1/1. Its activity is regulated as follows. Inhibited by fructose 1,6-bisphosphate (FBP). Functionally, key enzyme in the regulation of glycerol uptake and metabolism. Catalyzes the phosphorylation of glycerol to yield sn-glycerol 3-phosphate. This chain is Glycerol kinase, found in Borrelia duttonii (strain Ly).